A 211-amino-acid chain; its full sequence is Redox-sensing transcriptional repressor Rex (211 aa).

The H-T-H motif DNA-binding region spans 18-57 (LYYRFLENLHASGKQRVSSSELSEAVKVDSATIRRDFSYF). 92-97 (GVGNLG) serves as a coordination point for NAD(+).

Belongs to the transcriptional regulatory Rex family. As to quaternary structure, homodimer.

The protein localises to the cytoplasm. In terms of biological role, modulates transcription in response to changes in cellular NADH/NAD(+) redox state. The chain is Redox-sensing transcriptional repressor Rex from Halalkalibacterium halodurans (strain ATCC BAA-125 / DSM 18197 / FERM 7344 / JCM 9153 / C-125) (Bacillus halodurans).